Reading from the N-terminus, the 200-residue chain is Imidazoleglycerol-phosphate dehydratase (200 aa).

Belongs to the imidazoleglycerol-phosphate dehydratase family.

The protein resides in the cytoplasm. It catalyses the reaction D-erythro-1-(imidazol-4-yl)glycerol 3-phosphate = 3-(imidazol-4-yl)-2-oxopropyl phosphate + H2O. It functions in the pathway amino-acid biosynthesis; L-histidine biosynthesis; L-histidine from 5-phospho-alpha-D-ribose 1-diphosphate: step 6/9. This chain is Imidazoleglycerol-phosphate dehydratase, found in Chlorobium phaeobacteroides (strain BS1).